Reading from the N-terminus, the 152-residue chain is Interleukin-1 family member 10 (152 aa).

This sequence belongs to the IL-1 family. Interacts with cargo receptor TMED10; the interaction mediates the translocation from the cytoplasm into the ERGIC (endoplasmic reticulum-Golgi intermediate compartment) and thereby secretion.

It localises to the cytoplasm. The protein resides in the endoplasmic reticulum-Golgi intermediate compartment. The protein localises to the secreted. In terms of biological role, cytokine with immunomodulatory activity. Alone, does not induce cytokine production, but reduces IL22 and IL17A production by T-cells in response to heat-killed Candida albicans. Reduces IL36G-induced production of IL8 by peripheral blood mononuclear cells. Increases IL6 production by dendritic cells stimulated by bacterial lipopolysaccharides (LPS). Ligand for IL-36R/IL1RL2. This chain is Interleukin-1 family member 10 (Il1f10), found in Mus musculus (Mouse).